The primary structure comprises 633 residues: Laccase ARB_05828 (633 aa).

Residues 1–16 (MKRLGLAALYIGSALA) form the signal peptide. The propeptide occupies 22–47 (GPPSRNVPRDDFPMFNPLPSTDLNTR). A glycan (N-linked (GlcNAc...) asparagine) is linked at N143. Residues H148, H150, H192, and H194 each coordinate Cu cation. C169 and C607 are joined by a disulfide. One can recognise a Plastocyanin-like domain in the interval 224–353 (LLMTDHLHSS…GRYWVRTTPA (130 aa)). N286 and N456 each carry an N-linked (GlcNAc...) asparagine glycan. Positions 508, 511, 513, 568, 569, 570, and 574 each coordinate Cu cation.

It belongs to the multicopper oxidase family. Monomer. Requires Cu cation as cofactor.

It localises to the secreted. It carries out the reaction 4 hydroquinone + O2 = 4 benzosemiquinone + 2 H2O. This chain is Laccase ARB_05828, found in Arthroderma benhamiae (strain ATCC MYA-4681 / CBS 112371) (Trichophyton mentagrophytes).